A 504-amino-acid polypeptide reads, in one-letter code: Xylose import ATP-binding protein XylG (504 aa).

2 consecutive ABC transporter domains span residues 6-243 (LEMK…VGRE) and 260-504 (LKVD…TGGK). ATP is bound at residue 38 to 45 (GENGAGKS).

It belongs to the ABC transporter superfamily. Xylose importer (TC 3.A.1.2.4) family. The complex is composed of two ATP-binding proteins (XylG), two transmembrane proteins (XylH) and a solute-binding protein (XylF).

The protein localises to the cell membrane. The catalysed reaction is D-xylose(out) + ATP + H2O = D-xylose(in) + ADP + phosphate + H(+). Its function is as follows. Part of the ABC transporter complex XylFGH involved in xylose import. Responsible for energy coupling to the transport system. This Geobacillus kaustophilus (strain HTA426) protein is Xylose import ATP-binding protein XylG.